Here is a 418-residue protein sequence, read N- to C-terminus: Gamma-glutamyl phosphate reductase (418 aa).

Belongs to the gamma-glutamyl phosphate reductase family.

It is found in the cytoplasm. The enzyme catalyses L-glutamate 5-semialdehyde + phosphate + NADP(+) = L-glutamyl 5-phosphate + NADPH + H(+). Its pathway is amino-acid biosynthesis; L-proline biosynthesis; L-glutamate 5-semialdehyde from L-glutamate: step 2/2. Catalyzes the NADPH-dependent reduction of L-glutamate 5-phosphate into L-glutamate 5-semialdehyde and phosphate. The product spontaneously undergoes cyclization to form 1-pyrroline-5-carboxylate. The polypeptide is Gamma-glutamyl phosphate reductase (Lacticaseibacillus casei (strain BL23) (Lactobacillus casei)).